The sequence spans 386 residues: MSVIKMTDLDLAGKRVFIRADLNVPVKDGKVTSDARIRATIPTLKLALEKGAKVMVTSHLGRPTEGEFKPEDSLQPVVDYLKNAGFNVRLEQDYLNGVDVKDGEIVVLENVRVNKGEKKNDPELGKKYAALCDVFVMDAFGTAHRAQASTYGVAEFAPIACAGPLLAAELDALGKALKEPARPMVAIVGGSKVSTKLEVLNSLSKIADQIIVGGGIANTFIAAAGHNVGKSLYEADLIPVAKELAANTDIPVPVDVRVGLEFSETAAATEKAVNEVKDDESIFDIGDKSAEQLAEIIKNAKTVLWNGPVGVFEFPHFRKGTEIISHAIANSDAFSIAGGGDTLAAINLFGIADKISYISTGGGAFLEFVEGKVLPAVEILEKRAKN.

Substrate is bound by residues 21–23, arginine 36, 59–62, arginine 112, and arginine 145; these read DLN and HLGR. ATP contacts are provided by residues lysine 196, glutamate 313, and 339–342; that span reads GGDT.

This sequence belongs to the phosphoglycerate kinase family. In terms of assembly, monomer.

The protein localises to the cytoplasm. It catalyses the reaction (2R)-3-phosphoglycerate + ATP = (2R)-3-phospho-glyceroyl phosphate + ADP. It functions in the pathway carbohydrate degradation; glycolysis; pyruvate from D-glyceraldehyde 3-phosphate: step 2/5. The chain is Phosphoglycerate kinase from Haemophilus influenzae (strain PittEE).